A 170-amino-acid polypeptide reads, in one-letter code: Transcriptional repressor NrdR (170 aa).

Residues 3–34 (CPFCRHPDSRVVDSRTTDDGTSIRRRRQCPDC) fold into a zinc finger. Residues 46 to 136 (LMVVKRSGVT…VYRAFDSLED (91 aa)) enclose the ATP-cone domain. The tract at residues 148-170 (RPSAEDRGSGETLEVPAPAIAAD) is disordered.

It belongs to the NrdR family. It depends on Zn(2+) as a cofactor.

In terms of biological role, negatively regulates transcription of bacterial ribonucleotide reductase nrd genes and operons by binding to NrdR-boxes. The polypeptide is Transcriptional repressor NrdR (Streptomyces griseus subsp. griseus (strain JCM 4626 / CBS 651.72 / NBRC 13350 / KCC S-0626 / ISP 5235)).